An 82-amino-acid chain; its full sequence is MPKRTLQGVVVSDKTAKTVVVRVDRRFTHPIYKKTIRRSKNYHAHDENNEFKPGDMVWIEESKPISKLKRWVVIRGEHKKSA.

The protein belongs to the universal ribosomal protein uS17 family. As to quaternary structure, part of the 30S ribosomal subunit.

Functionally, one of the primary rRNA binding proteins, it binds specifically to the 5'-end of 16S ribosomal RNA. The polypeptide is Small ribosomal subunit protein uS17 (Bradyrhizobium diazoefficiens (strain JCM 10833 / BCRC 13528 / IAM 13628 / NBRC 14792 / USDA 110)).